A 156-amino-acid polypeptide reads, in one-letter code: Small ribosomal subunit protein uS7 (156 aa).

It belongs to the universal ribosomal protein uS7 family. Part of the 30S ribosomal subunit. Contacts proteins S9 and S11.

In terms of biological role, one of the primary rRNA binding proteins, it binds directly to 16S rRNA where it nucleates assembly of the head domain of the 30S subunit. Is located at the subunit interface close to the decoding center, probably blocks exit of the E-site tRNA. This is Small ribosomal subunit protein uS7 from Mycoplasmopsis synoviae (strain 53) (Mycoplasma synoviae).